Here is a 122-residue protein sequence, read N- to C-terminus: Large ribosomal subunit protein bL12 (122 aa).

It belongs to the bacterial ribosomal protein bL12 family. In terms of assembly, homodimer. Part of the ribosomal stalk of the 50S ribosomal subunit. Forms a multimeric L10(L12)X complex, where L10 forms an elongated spine to which 2 to 4 L12 dimers bind in a sequential fashion. Binds GTP-bound translation factors.

Its function is as follows. Forms part of the ribosomal stalk which helps the ribosome interact with GTP-bound translation factors. Is thus essential for accurate translation. This chain is Large ribosomal subunit protein bL12, found in Streptococcus mutans serotype c (strain ATCC 700610 / UA159).